An 87-amino-acid chain; its full sequence is Small ribosomal subunit protein uS17 (87 aa).

The protein belongs to the universal ribosomal protein uS17 family. Part of the 30S ribosomal subunit.

Functionally, one of the primary rRNA binding proteins, it binds specifically to the 5'-end of 16S ribosomal RNA. The sequence is that of Small ribosomal subunit protein uS17 from Pelotomaculum thermopropionicum (strain DSM 13744 / JCM 10971 / SI).